The sequence spans 254 residues: Thiazole synthase (254 aa).

The Schiff-base intermediate with DXP role is filled by Lys-95. Residues Gly-156, Ala-182 to Gly-183, and Asn-204 to Thr-205 contribute to the 1-deoxy-D-xylulose 5-phosphate site.

Belongs to the ThiG family. Homotetramer. Forms heterodimers with either ThiH or ThiS.

The protein resides in the cytoplasm. The enzyme catalyses [ThiS sulfur-carrier protein]-C-terminal-Gly-aminoethanethioate + 2-iminoacetate + 1-deoxy-D-xylulose 5-phosphate = [ThiS sulfur-carrier protein]-C-terminal Gly-Gly + 2-[(2R,5Z)-2-carboxy-4-methylthiazol-5(2H)-ylidene]ethyl phosphate + 2 H2O + H(+). The protein operates within cofactor biosynthesis; thiamine diphosphate biosynthesis. Its function is as follows. Catalyzes the rearrangement of 1-deoxy-D-xylulose 5-phosphate (DXP) to produce the thiazole phosphate moiety of thiamine. Sulfur is provided by the thiocarboxylate moiety of the carrier protein ThiS. In vitro, sulfur can be provided by H(2)S. The chain is Thiazole synthase from Shewanella putrefaciens (strain CN-32 / ATCC BAA-453).